We begin with the raw amino-acid sequence, 520 residues long: Bifunctional dihydrofolate reductase-thymidylate synthase (520 aa).

The DHFR domain maps to 26-229; sequence AFSIVVALDK…LEFEICKYVP (204 aa). Val-30 contributes to the substrate binding site. NADP(+) is bound by residues Ala-32 and 38–44; that span reads GIGDGES. Asp-52 contributes to the substrate binding site. Residues 81 to 83, 102 to 105, and 157 to 164 each bind NADP(+); these read RKT, LSSK, and GGAQVYAD. The substrate site is built by Tyr-162 and Thr-180. A thymidylate synthase region spans residues 234 to 520; the sequence is ERQYLELIDR…HPPIKMEMAV (287 aa). DUMP is bound at residue Arg-254. The active site involves Cys-400. DUMP-binding positions include His-401, 421–425, Asn-433, and 463–465; these read QRSCD and HVY.

It in the N-terminal section; belongs to the dihydrofolate reductase family. In the C-terminal section; belongs to the thymidylate synthase family.

It catalyses the reaction (6S)-5,6,7,8-tetrahydrofolate + NADP(+) = 7,8-dihydrofolate + NADPH + H(+). The catalysed reaction is dUMP + (6R)-5,10-methylene-5,6,7,8-tetrahydrofolate = 7,8-dihydrofolate + dTMP. It functions in the pathway cofactor biosynthesis; tetrahydrofolate biosynthesis; 5,6,7,8-tetrahydrofolate from 7,8-dihydrofolate: step 1/1. In terms of biological role, bifunctional enzyme. Involved in de novo dTMP biosynthesis. Key enzyme in folate metabolism. Catalyzes an essential reaction for de novo glycine and purine synthesis, DNA precursor synthesis, and for the conversion of dUMP to dTMP. The polypeptide is Bifunctional dihydrofolate reductase-thymidylate synthase (Leishmania amazonensis).